A 589-amino-acid chain; its full sequence is Proline--tRNA ligase (589 aa).

This sequence belongs to the class-II aminoacyl-tRNA synthetase family. ProS type 1 subfamily. As to quaternary structure, homodimer.

It localises to the cytoplasm. The catalysed reaction is tRNA(Pro) + L-proline + ATP = L-prolyl-tRNA(Pro) + AMP + diphosphate. Its function is as follows. Catalyzes the attachment of proline to tRNA(Pro) in a two-step reaction: proline is first activated by ATP to form Pro-AMP and then transferred to the acceptor end of tRNA(Pro). As ProRS can inadvertently accommodate and process non-cognate amino acids such as alanine and cysteine, to avoid such errors it has two additional distinct editing activities against alanine. One activity is designated as 'pretransfer' editing and involves the tRNA(Pro)-independent hydrolysis of activated Ala-AMP. The other activity is designated 'posttransfer' editing and involves deacylation of mischarged Ala-tRNA(Pro). The misacylated Cys-tRNA(Pro) is not edited by ProRS. This chain is Proline--tRNA ligase, found in Nocardioides sp. (strain ATCC BAA-499 / JS614).